A 273-amino-acid chain; its full sequence is Dermonecrotic toxin LapSicTox-alphaIB2 (273 aa).

H5 is an active-site residue. Positions 25 and 27 each coordinate Mg(2+). The active-site Nucleophile is the H41. 2 disulfide bridges follow: C45-C51 and C47-C190. Position 85 (D85) interacts with Mg(2+). The N-linked (GlcNAc...) asparagine glycan is linked to N250.

Belongs to the arthropod phospholipase D family. Class II subfamily. It depends on Mg(2+) as a cofactor. Expressed by the venom gland.

The protein resides in the secreted. It catalyses the reaction an N-(acyl)-sphingosylphosphocholine = an N-(acyl)-sphingosyl-1,3-cyclic phosphate + choline. The catalysed reaction is an N-(acyl)-sphingosylphosphoethanolamine = an N-(acyl)-sphingosyl-1,3-cyclic phosphate + ethanolamine. It carries out the reaction a 1-acyl-sn-glycero-3-phosphocholine = a 1-acyl-sn-glycero-2,3-cyclic phosphate + choline. The enzyme catalyses a 1-acyl-sn-glycero-3-phosphoethanolamine = a 1-acyl-sn-glycero-2,3-cyclic phosphate + ethanolamine. Its function is as follows. Dermonecrotic toxins cleave the phosphodiester linkage between the phosphate and headgroup of certain phospholipids (sphingolipid and lysolipid substrates), forming an alcohol (often choline) and a cyclic phosphate. This toxin acts on sphingomyelin (SM). It may also act on ceramide phosphoethanolamine (CPE), lysophosphatidylcholine (LPC) and lysophosphatidylethanolamine (LPE), but not on lysophosphatidylserine (LPS), and lysophosphatidylglycerol (LPG). It acts by transphosphatidylation, releasing exclusively cyclic phosphate products as second products. Induces dermonecrosis, hemolysis, increased vascular permeability, edema, inflammatory response, and platelet aggregation. In Loxosceles apachea (Apache recluse spider), this protein is Dermonecrotic toxin LapSicTox-alphaIB2.